The chain runs to 338 residues: tRNA N6-adenosine threonylcarbamoyltransferase (338 aa).

Fe cation contacts are provided by His114 and His118. Residues Ile137–Gly141, Asp170, Gly183, Asp187, and Asn277 each bind substrate. Residue Asp305 coordinates Fe cation.

Belongs to the KAE1 / TsaD family. The cofactor is Fe(2+).

The protein resides in the cytoplasm. The enzyme catalyses L-threonylcarbamoyladenylate + adenosine(37) in tRNA = N(6)-L-threonylcarbamoyladenosine(37) in tRNA + AMP + H(+). Functionally, required for the formation of a threonylcarbamoyl group on adenosine at position 37 (t(6)A37) in tRNAs that read codons beginning with adenine. Is involved in the transfer of the threonylcarbamoyl moiety of threonylcarbamoyl-AMP (TC-AMP) to the N6 group of A37, together with TsaE and TsaB. TsaD likely plays a direct catalytic role in this reaction. In Clostridioides difficile (strain 630) (Peptoclostridium difficile), this protein is tRNA N6-adenosine threonylcarbamoyltransferase.